Here is a 107-residue protein sequence, read N- to C-terminus: UPF0145 protein CKO_02237 (107 aa).

Belongs to the UPF0145 family.

In Citrobacter koseri (strain ATCC BAA-895 / CDC 4225-83 / SGSC4696), this protein is UPF0145 protein CKO_02237.